The chain runs to 202 residues: Small ribosomal subunit protein uS4c (202 aa).

The region spanning 90-150 is the S4 RNA-binding domain; that stretch reads MRLDNVIFRL…NQRKSQAIIN (61 aa).

The protein belongs to the universal ribosomal protein uS4 family. As to quaternary structure, part of the 30S ribosomal subunit. Contacts protein S5. The interaction surface between S4 and S5 is involved in control of translational fidelity.

The protein resides in the plastid. It is found in the chloroplast. One of the primary rRNA binding proteins, it binds directly to 16S rRNA where it nucleates assembly of the body of the 30S subunit. Functionally, with S5 and S12 plays an important role in translational accuracy. The sequence is that of Small ribosomal subunit protein uS4c (rps4) from Canalohypopterygium tamariscinum (Moss).